The primary structure comprises 382 residues: uncharacterized protein (382 aa).

A run of 11 helical transmembrane segments spans residues 8-28 (VLLLLCGLLLFTISIAVLNTL), 41-61 (WQVGMVSSSYFTGNLVGTLIA), 73-93 (SYHCSCILFALATCGLMLTVD), 94-114 (FWSWLGWRFLAGIACALIWVI), 133-153 (AAYMMVYYLGTVIGQLLLGIV), 157-177 (LLSVIPWVGALVITAMLPLLF), 208-228 (GCIISGVLLGSLYGLLPLYLS), 235-255 (ASVGGWMALLVSSGIIGQWPM), 274-294 (VVILGSVAILGNYAMAPALFI), 325-345 (ALLMSYTLGSLAGPTMTSLLM), and 349-369 (SDNLLFIMIAGVAFVYLMMLL).

The protein belongs to the major facilitator superfamily. YcaD (TC 2.A.1.26) family.

Its subcellular location is the cell inner membrane. This is an uncharacterized protein from Yersinia pseudotuberculosis serotype IB (strain PB1/+).